We begin with the raw amino-acid sequence, 1226 residues long: DNA-directed RNA polymerase subunit beta'' (1226 aa).

Zn(2+)-binding residues include Cys223, Cys297, Cys304, and Cys307.

It belongs to the RNA polymerase beta' chain family. RpoC2 subfamily. In plastids the minimal PEP RNA polymerase catalytic core is composed of four subunits: alpha, beta, beta', and beta''. When a (nuclear-encoded) sigma factor is associated with the core the holoenzyme is formed, which can initiate transcription. Requires Zn(2+) as cofactor.

It is found in the plastid. It localises to the chloroplast. It carries out the reaction RNA(n) + a ribonucleoside 5'-triphosphate = RNA(n+1) + diphosphate. In terms of biological role, DNA-dependent RNA polymerase catalyzes the transcription of DNA into RNA using the four ribonucleoside triphosphates as substrates. The polypeptide is DNA-directed RNA polymerase subunit beta'' (Pyropia yezoensis (Susabi-nori)).